Consider the following 728-residue polypeptide: FAD-dependent monooxygenase avaB (728 aa).

Residues 17–37 traverse the membrane as a helical segment; the sequence is VIDLLLTFFFYSGLYGLIAAK. Residues 50-64 show a composition bias toward polar residues; the sequence is NQQCENTDDVPQSFQ. Residues 50–72 are disordered; it reads NQQCENTDDVPQSFQRPRDTRST. Val-168 contacts FAD. 490 to 491 is a binding site for NADP(+); the sequence is DL.

The protein belongs to the FAD-binding monooxygenase family. FAD is required as a cofactor.

It is found in the membrane. It participates in secondary metabolite metabolism. Multifunctional FAD-dependent monooxygenase; part of the cluster that mediates the biosynthesis of a highly modified cyclo-arginine-tryptophan dipeptide (cRW). Within the pathway, avaB uses the avaA cyclo-arginine-tryptophan dipeptide (cRW) as substrate to generate the cyclo-Arg-formylkynurenine diketopiperazine (DKP). AvaB also catalyzes an additional N-oxidation of the avaC product which is followed by cyclization and dehydration. The first step of the pathway is perfornmed by the arginine-containing cyclodipeptide synthase (RCPDS) avaA that acts as the scaffold-generating enzyme and is responsible for formation of the cyclo-Arg-Trp (cRW) diketopiperazine. AvaB then acts as a multifunctional flavoenzyme that is responsible for generating the cyclo-Arg-formylkynurenine DKP, which can be deformylated by avaC. AvaB then further catalyzes an additional N-oxidation followed by cyclization and dehydration. The next step is an N-acetylation of the guanidine group catalyzed by the arginine N-acetyltransferase avaD. The roles of the additional enzymes identified within the ava cluster still have to be determined. In Aspergillus versicolor, this protein is FAD-dependent monooxygenase avaB.